The chain runs to 226 residues: PKHD-type hydroxylase Pput_0892 (226 aa).

A Fe2OG dioxygenase domain is found at 78 to 178; it reads KVFPPLINCY…RYAAFFWTQS (101 aa). 3 residues coordinate Fe cation: histidine 96, aspartate 98, and histidine 159. Arginine 169 is a binding site for 2-oxoglutarate.

It depends on Fe(2+) as a cofactor. L-ascorbate is required as a cofactor.

In Pseudomonas putida (strain ATCC 700007 / DSM 6899 / JCM 31910 / BCRC 17059 / LMG 24140 / F1), this protein is PKHD-type hydroxylase Pput_0892.